Reading from the N-terminus, the 203-residue chain is Sperm-specific protein PHI-2B/PHI-3 (203 aa).

Positions M1–R35 are enriched in basic residues. Disordered stretches follow at residues M1–L46 and K104–K203. One can recognise an H15 domain in the interval K41–K120. Composition is skewed to basic residues over residues K126–K140 and K147–K203.

Post-translationally, PL-II* and PL-IV are produced by post-translational cleavage of a common precursor. Sperm.

The protein localises to the nucleus. The protein resides in the chromosome. In terms of biological role, linker histones are implicated in chromatin remodeling and/or transcriptional regulation during spermiogenesis, the process of spermatid maturation into spermatozoa. Protamines substitute for histones in the chromatin of sperm during the haploid phase of spermatogenesis. They compact sperm DNA into a highly condensed, stable and inactive complex. The protein is Sperm-specific protein PHI-2B/PHI-3 of Mytilus trossulus (Blue mussel).